Here is a 177-residue protein sequence, read N- to C-terminus: Decaprenylphosphoryl-5-phosphoribose phosphatase (177 aa).

Helical transmembrane passes span His35–Pro55, Leu62–Val82, Gly124–Val144, and Val150–Gly170.

It belongs to the PA-phosphatase related phosphoesterase family.

It is found in the cell membrane. It carries out the reaction trans,octa-cis-decaprenylphospho-beta-D-ribofuranose 5-phosphate + H2O = trans,octa-cis-decaprenylphospho-beta-D-ribofuranose + phosphate. The protein operates within cell wall biogenesis; cell wall polysaccharide biosynthesis. Functionally, phosphatase involved in the biosynthesis of decaprenylphosphoryl arabinose (DPA), which serves as the arabinose donor for the biosynthesis of arabinogalactan, the major mycobacterial cell wall polysaccharide. Catalyzes the dephosphorylation of decaprenylphosphoryl-5-phosphoribose (DPPR) to decaprenyl-phosphoribose (DPR). This Mycobacterium tuberculosis (strain CDC 1551 / Oshkosh) protein is Decaprenylphosphoryl-5-phosphoribose phosphatase.